Reading from the N-terminus, the 112-residue chain is uncharacterized protein (112 aa).

The next 2 membrane-spanning stretches (helical) occupy residues I33 to F53 and M69 to V89.

The protein resides in the membrane. This is an uncharacterized protein from Saccharomyces cerevisiae (strain ATCC 204508 / S288c) (Baker's yeast).